A 500-amino-acid polypeptide reads, in one-letter code: Neuronal acetylcholine receptor subunit beta-2 (500 aa).

Positions 1–24 (MAGHSNSMALFSFSLLWLCSGVLG) are cleaved as a signal peptide. The Extracellular portion of the chain corresponds to 25–237 (TDTEERLVEH…IIRRKPLFYT (213 aa)). Residues asparagine 50 and asparagine 167 are each glycosylated (N-linked (GlcNAc...) asparagine). Cysteine 154 and cysteine 168 are joined by a disulfide. A helical membrane pass occupies residues 238–258 (INLIIPCVLITSLAILVFYLP). Residues 259 to 266 (SDCGEKMT) lie on the Cytoplasmic side of the membrane. Residues 267 to 287 (LCISVLLALTVFLLLISKIVP) traverse the membrane as a helical segment. Topologically, residues 288–299 (PTSLDVPLVGKY) are extracellular. Residues 300–320 (LMFTMVLVTFSIVTSVCVLNV) traverse the membrane as a helical segment. Over 321 to 458 (HHRSPTTHTM…WKYVAMVIDR (138 aa)) the chain is Cytoplasmic. Residues 459 to 479 (LFLWIFVFVCVFGTVGMFLQP) form a helical membrane-spanning segment.

The protein belongs to the ligand-gated ion channel (TC 1.A.9) family. Acetylcholine receptor (TC 1.A.9.1) subfamily. Beta-2/CHRNB2 sub-subfamily. Neuronal AChR is a heteropentamer composed of two different types of subunits: alpha and beta. CHRNB2/Beta-2 subunit can be combined to CHRNA2/alpha-2, CHRNA3/alpha-3 or CHRNA4/alpha-4, CHRNA5/alpha-5, CHRNA6/alpha-6 and CHRNB3/beta-3 to give rise to functional receptors. CHRNA2:CHRNB2 and CHRNA4:CHRNB2 nAChR complexes exist in two subtypes: LS (low agonist sensitivity) with a (CHRNA2/4)3:(CHRNB2)2 and HS (high agonist sensitivity) with a (CHRNA2/4)2:(CHRNB2)3 stoichiometry; the subtypes differ in their subunit binding interfaces which are involved in ligand binding. Cells produce predominantly an (CHRNA4)3:(CHRNB2)2 nAChR. The stoichiometric form (CHRNA4)2:(CHRNB2)3 expression is selectively up-regulated by nicotine and has lower single channel conductance and calcium permeability. Also part of the stoichiometric forms: (CHRNA4:CHRNB2)2:CHRNB3 or (CHRNA6:CHRNB2)2:CHRNB3. Can form heteropentamers with CHRNA7, mainly found in basal forebrain cholinergic neurons. Interacts with RIC3; which is required for proper folding and assembly. Interacts with LYPD6. Expressed in most regions of the CNS.

It localises to the synaptic cell membrane. Its subcellular location is the cell membrane. The catalysed reaction is Ca(2+)(in) = Ca(2+)(out). The enzyme catalyses K(+)(in) = K(+)(out). It carries out the reaction Na(+)(in) = Na(+)(out). With respect to regulation, activated by a myriad of ligands such as acetylcholine, cytisine, nicotine, choline and epibatidine. Channel potentiation by calcium is stoichiometry-selective, CHRNA4:CHRNB2 nACh receptor is achieved by calcium association with topographically distinct sites framed by anionic residues within the CHRNA4 subunit and between the CHRNA4 and CHRNB2 subunits. Oligomeric amyloid-beta protein 42 activates specifially CHRNA7:CHRNB2 nAchRs. nAChR activity is inhibited by the antagonist alpha-conotoxins BuIA, PnIA, PnIC, GID and MII, small disulfide-constrained peptides from cone snails. Its function is as follows. Component of neuronal acetylcholine receptors (nAChRs) that function as pentameric, ligand-gated cation channels with high calcium permeability among other activities. nAChRs are excitatory neurotrasnmitter receptors formed by a collection of nAChR subunits known to mediate synaptic transmission in the nervous system and the neuromuscular junction. Each nAchR subunit confers differential attributes to channel properties, including activation, deactivation and desensitization kinetics, pH sensitivity, cation permeability, and binding to allosteric modulators. CHRNB2 forms heteropentameric neuronal acetylcholine receptors with CHRNA2, CHRNA3, CHRNA4 and CHRNA6, as well as CHRNA5 and CHRNB3 as accesory subunits. Found in two major stoichiometric forms,(CHRNA4)3:(CHRNB2)2 and (CHRNA4)2:(CHRNB2)3, the two stoichiometric forms differ in their unitary conductance, calcium permeability, ACh sensitivity and potentiation by divalent cation. Heteropentameric channels with CHRNA6 and CHRNA4 exhibit high sensitivity to ACh and nicotine and are predominantly expressed in only a few brain areas, including dopaminergic neurons, norepirephrine neurons and cells of the visual system. nAChrs containing CHRNA6 subunits mediate endogenous cholinergic modulation of dopamine and gamma-aminobutyric acid (GABA) release in response to nicotine at nerve terminals. Also forms functional nAChRs with other subunits such as CHRNA7:CHRNB2, mainly expressed in basal forebrain cholinergic neurons. The chain is Neuronal acetylcholine receptor subunit beta-2 (Chrnb2) from Rattus norvegicus (Rat).